The primary structure comprises 393 residues: S-adenosylmethionine synthase (393 aa).

Histidine 16 contributes to the ATP binding site. Aspartate 18 is a Mg(2+) binding site. Residue glutamate 44 participates in K(+) binding. Residues glutamate 57 and glutamine 100 each coordinate L-methionine. The interval 100 to 110 is flexible loop; it reads QSNDIAQGVDH. Residues 167–169, 238–239, aspartate 247, 253–254, alanine 270, and lysine 274 each bind ATP; these read DAK, RF, and RK. Aspartate 247 contacts L-methionine. Lysine 278 provides a ligand contact to L-methionine.

It belongs to the AdoMet synthase family. In terms of assembly, homotetramer; dimer of dimers. Mg(2+) is required as a cofactor. The cofactor is K(+).

Its subcellular location is the cytoplasm. The catalysed reaction is L-methionine + ATP + H2O = S-adenosyl-L-methionine + phosphate + diphosphate. It functions in the pathway amino-acid biosynthesis; S-adenosyl-L-methionine biosynthesis; S-adenosyl-L-methionine from L-methionine: step 1/1. Functionally, catalyzes the formation of S-adenosylmethionine (AdoMet) from methionine and ATP. The overall synthetic reaction is composed of two sequential steps, AdoMet formation and the subsequent tripolyphosphate hydrolysis which occurs prior to release of AdoMet from the enzyme. This Variovorax paradoxus (strain S110) protein is S-adenosylmethionine synthase.